The primary structure comprises 280 residues: MIIDGKRVSEKRLELIKEEIDESGLYPRLATVIAGDNPASLLYVQMKHRACERVHIGSISITLPGDSTTAKVLETIDRLNKDPEINGILVQLPLPAGVDTEQVIEAILPEKDVDGFHPFNLGKLLGGSPTFAPCTPLGIMTLLKEYKIDPAGKRAVVIGRSIDVGRPMAALLINANATVTVCHSRTKDLAAELRKADIIVSAMGKARFITGDMVSGDAVVIDVGINHVDGKLCGDVDFASVSEKVAAITPVPGGVGPMTIATLMENTFKAAKMQSCRTVH.

Residues 159-161 (GRS), Ser184, and Ile225 each bind NADP(+).

Belongs to the tetrahydrofolate dehydrogenase/cyclohydrolase family. As to quaternary structure, homodimer.

It carries out the reaction (6R)-5,10-methylene-5,6,7,8-tetrahydrofolate + NADP(+) = (6R)-5,10-methenyltetrahydrofolate + NADPH. The enzyme catalyses (6R)-5,10-methenyltetrahydrofolate + H2O = (6R)-10-formyltetrahydrofolate + H(+). It participates in one-carbon metabolism; tetrahydrofolate interconversion. Functionally, catalyzes the oxidation of 5,10-methylenetetrahydrofolate to 5,10-methenyltetrahydrofolate and then the hydrolysis of 5,10-methenyltetrahydrofolate to 10-formyltetrahydrofolate. The protein is Bifunctional protein FolD of Methanosphaerula palustris (strain ATCC BAA-1556 / DSM 19958 / E1-9c).